Here is a 134-residue protein sequence, read N- to C-terminus: MKVIRIILQVLILYVFFMIGEAIQHLFHLPVSGSIVGLVLLLICLGLRIVPVSIIEDGAGFLLSFLPLLFIPAMTGVINYPSLISFNGLMLLITVVLSTIVTIIAAGFASQLLEKKAKKREEKEKCSKHVSRSL.

A run of 4 helical transmembrane segments spans residues 3 to 23 (VIRI…GEAI), 35 to 55 (IVGL…VSII), 58 to 78 (GAGF…TGVI), and 89 to 109 (LMLL…AGFA).

The protein resides in the cell membrane. In Bacillus subtilis (strain 168), this protein is Putative integral membrane protein YxzK (yxzK).